We begin with the raw amino-acid sequence, 356 residues long: Protein HEXIM1 (356 aa).

Composition is skewed to basic and acidic residues over residues 1 to 11 and 24 to 47; these read MAEPLLTEHQH and VHEE…DSRW. Residues 1-162 are disordered; that stretch reads MAEPLLTEHQ…RPSKKKRHWK (162 aa). Residues 48–58 show a composition bias toward polar residues; it reads QSRASLQSGSR. The span at 84–93 shows a compositional bias: basic and acidic residues; sequence SLEKGEKGQN. Residues Ser98 and Ser103 each carry the phosphoserine modification. Residues 145–162 are compositionally biased toward basic residues; the sequence is LGKKKHRRRPSKKKRHWK. The tract at residues 147–174 is basic region; mediates nuclear localization and interaction with 7SK snRNA and NR3C1; the sequence is KKKHRRRPSKKKRHWKPYYKLTWEEKKK. The interval 199-202 is interaction with P-TEFb; that stretch reads PYNT. The interval 207 to 247 is autoinhibitory acidic region; in absence of 7SK snRNA interacts with the basic region preventing interaction with P-TEFb and modulating subcellular localization; the sequence is MDDHDQEEPDLKTGLYPKRAAAKSDDTSDEDFVEEAGEEDG. The interval 210 to 259 is disordered; it reads HDQEEPDLKTGLYPKRAAAKSDDTSDEDFVEEAGEEDGGSDGMGGDGSEF. Position 230 is a phosphoserine (Ser230). Thr233 carries the post-translational modification Phosphothreonine. Over residues 233 to 248 the composition is skewed to acidic residues; it reads TSDEDFVEEAGEEDGG. Phosphoserine is present on residues Ser234, Ser249, and Ser257. Residues 280–346 are a coiled coil; that stretch reads SKQELIKEYL…LTENELHRQQ (67 aa). The segment at 283–311 is mediates interaction with CCNT1; the sequence is ELIKEYLELEKCLSRKEDENNRLRLESKR. Residues 307–352 form a required for inhibition of ESR1-dependent transcription region; that stretch reads LESKRLGGVDARVRELELELDRLRAENLQLLTENELHRQQERAPLS.

The protein belongs to the HEXIM family. Homooligomer and heterooligomer with HEXIM2; probably dimeric. Core component of the 7SK RNP complex, at least composed of 7SK RNA, LARP7, MEPCE, HEXIM1 (or HEXIM2) and P-TEFb (composed of CDK9 and CCNT1/cyclin-T1). Interacts with the N-CoR complex through NCOR1. Interacts with ESR1 and NR3C1. May interact with NF-kappa-B through RELA. Interacts with CCNT2; mediates formation of a tripartite complex with KPNA2. Part of the HDP-RNP complex composed of at least HEXIM1, PRKDC, XRCC5, XRCC6, paraspeckle proteins (SFPQ, NONO, PSPC1, RBM14, and MATR3) and NEAT1 non-coding RNA. Widely expressed with higher expression in heart, skeletal muscle and brain (at protein level).

The protein localises to the nucleus. It localises to the cytoplasm. In terms of biological role, transcriptional regulator which functions as a general RNA polymerase II transcription inhibitor. Core component of the 7SK RNP complex: in cooperation with 7SK snRNA sequesters P-TEFb in a large inactive 7SK snRNP complex preventing RNA polymerase II phosphorylation and subsequent transcriptional elongation. May also regulate NF-kappa-B, ESR1, NR3C1 and CIITA-dependent transcriptional activity. Plays a role in the regulation of DNA virus-mediated innate immune response by assembling into the HDP-RNP complex, a complex that serves as a platform for IRF3 phosphorylation and subsequent innate immune response activation through the cGAS-STING pathway. The protein is Protein HEXIM1 (Hexim1) of Mus musculus (Mouse).